The chain runs to 86 residues: Candiduxin-2 (86 aa).

The first 21 residues, 1 to 21 (MKTLLLTLVVLTIACLDLGYT), serve as a signal peptide directing secretion. Disulfide bonds link Cys24-Cys45, Cys38-Cys62, Cys66-Cys78, and Cys79-Cys84.

It belongs to the three-finger toxin family. Short-chain subfamily. Orphan group IX sub-subfamily. Expressed by the venom gland.

The protein localises to the secreted. The chain is Candiduxin-2 from Bungarus candidus (Malayan krait).